Here is a 143-residue protein sequence, read N- to C-terminus: MQLNSIKPAAGAKHAKRRVGRGIGSGLGKTAGRGHKGQKSRAGGYHKVGFEGGQMPLQRRLPKRGFKSQSLRFNAEVTLTTLDRLGLAEVDVLALKQAGLVGELIKVVKVIKSGALNRAVKLSGVGVTAGAKAAIEAAGGSVA.

The disordered stretch occupies residues 1–56 (MQLNSIKPAAGAKHAKRRVGRGIGSGLGKTAGRGHKGQKSRAGGYHKVGFEGGQMP). The segment covering 21 to 31 (RGIGSGLGKTA) has biased composition (gly residues).

It belongs to the universal ribosomal protein uL15 family. In terms of assembly, part of the 50S ribosomal subunit.

Its function is as follows. Binds to the 23S rRNA. This is Large ribosomal subunit protein uL15 from Verminephrobacter eiseniae (strain EF01-2).